The primary structure comprises 119 residues: Beta-2-microglobulin (119 aa).

Residues 1-20 (MAPFVAIALLVLLSLSGLEA) form the signal peptide. An Ig-like C1-type domain is found at 25 to 114 (PKIQVYSRHP…VTFSTPKTVK (90 aa)). Cys45 and Cys100 are disulfide-bonded.

It belongs to the beta-2-microglobulin family. Heterodimer of an alpha chain and a beta chain. Beta-2-microglobulin is the beta-chain of major histocompatibility complex class I molecules.

It localises to the secreted. In terms of biological role, component of the class I major histocompatibility complex (MHC). Involved in the presentation of peptide antigens to the immune system. The polypeptide is Beta-2-microglobulin (B2M) (Cheracebus torquatus (Collared titi monkey)).